A 189-amino-acid chain; its full sequence is Peptidyl-tRNA hydrolase (189 aa).

Tyr-16 serves as a coordination point for tRNA. The Proton acceptor role is filled by His-21. Residues Phe-67, Asn-69, and Asn-115 each contribute to the tRNA site.

This sequence belongs to the PTH family. In terms of assembly, monomer.

Its subcellular location is the cytoplasm. The catalysed reaction is an N-acyl-L-alpha-aminoacyl-tRNA + H2O = an N-acyl-L-amino acid + a tRNA + H(+). Its function is as follows. Hydrolyzes ribosome-free peptidyl-tRNAs (with 1 or more amino acids incorporated), which drop off the ribosome during protein synthesis, or as a result of ribosome stalling. Functionally, catalyzes the release of premature peptidyl moieties from peptidyl-tRNA molecules trapped in stalled 50S ribosomal subunits, and thus maintains levels of free tRNAs and 50S ribosomes. The sequence is that of Peptidyl-tRNA hydrolase from Legionella pneumophila (strain Lens).